The sequence spans 166 residues: Thiol peroxidase (166 aa).

In terms of domain architecture, Thioredoxin spans 18 to 166 (LKVGDKAPDV…NYEALLKVLK (149 aa)). Cys-60 acts as the Cysteine sulfenic acid (-SOH) intermediate in catalysis. Cys-60 and Cys-94 form a disulfide bridge.

It belongs to the peroxiredoxin family. Tpx subfamily. As to quaternary structure, homodimer.

The enzyme catalyses a hydroperoxide + [thioredoxin]-dithiol = an alcohol + [thioredoxin]-disulfide + H2O. Functionally, thiol-specific peroxidase that catalyzes the reduction of hydrogen peroxide and organic hydroperoxides to water and alcohols, respectively. Plays a role in cell protection against oxidative stress by detoxifying peroxides. The chain is Thiol peroxidase from Helicobacter pylori (strain J99 / ATCC 700824) (Campylobacter pylori J99).